The primary structure comprises 514 residues: Beta-glucosidase 21 (514 aa).

An N-terminal signal peptide occupies residues 1-25 (MERPLHLLLVFLSSPWLLLLQGVSS). 2 residues coordinate a beta-D-glucoside: Gln47 and His147. The active-site Proton donor is Glu193. Residues Cys212 and Cys220 are joined by a disulfide bond. N-linked (GlcNAc...) asparagine glycans are attached at residues Asn219 and Asn224. The a beta-D-glucoside site is built by Tyr336 and Glu406. The active-site Nucleophile is the Glu406. Asn407 carries an N-linked (GlcNAc...) asparagine glycan. Trp448 and Phe465 together coordinate a beta-D-glucoside. Asn494 carries an N-linked (GlcNAc...) asparagine glycan.

It belongs to the glycosyl hydrolase 1 family.

It carries out the reaction Hydrolysis of terminal, non-reducing beta-D-glucosyl residues with release of beta-D-glucose.. This Oryza sativa subsp. japonica (Rice) protein is Beta-glucosidase 21 (BGLU21).